We begin with the raw amino-acid sequence, 285 residues long: Troponin T, cardiac muscle (285 aa).

A compositionally biased stretch (acidic residues) spans 1-58; the sequence is MSDVEEAVEEYEEQEEAAEEEHEEAVEEEAGGEAEAGEPCTAEDGEEEEGREAEDGPV. Disordered stretches follow at residues 1-83 and 111-206; these read MSDV…GERV and RKKE…EKKK. Ser2 carries the post-translational modification N-acetylserine. The residue at position 2 (Ser2) is a Phosphoserine; by CK2. Over residues 66 to 77 the composition is skewed to pro residues; the sequence is RPFMPNLVPPKI. 2 stretches are compositionally biased toward basic and acidic residues: residues 111–171 and 190–206; these read RKKE…DEAR and QTER…EKKK. Thr191 carries the post-translational modification Phosphothreonine; by PKC/PRKCA. Residue Ser195 is modified to Phosphoserine; by PKC/PRKCA. Residue Thr200 is modified to Phosphothreonine; by PKC/PRKCA and RAF1. Phosphothreonine; by PKC/PRKCA is present on Thr281.

This sequence belongs to the troponin T family. In terms of processing, the N-terminus is blocked. Post-translationally, phosphorylation at Thr-200 by PRKCA induces significant reduction in myofilament calcium sensitivity and actomyosin ATPase activity.

Troponin T is the tropomyosin-binding subunit of troponin, the thin filament regulatory complex which confers calcium-sensitivity to striated muscle actomyosin ATPase activity. In Bos taurus (Bovine), this protein is Troponin T, cardiac muscle (TNNT2).